A 129-amino-acid polypeptide reads, in one-letter code: Small ribosomal subunit protein uS8 (129 aa).

It belongs to the universal ribosomal protein uS8 family. In terms of assembly, part of the 30S ribosomal subunit.

Functionally, one of the primary rRNA binding proteins, it binds directly to 16S rRNA central domain where it helps coordinate assembly of the platform of the 30S subunit. This Picrophilus torridus (strain ATCC 700027 / DSM 9790 / JCM 10055 / NBRC 100828 / KAW 2/3) protein is Small ribosomal subunit protein uS8.